A 2213-amino-acid chain; its full sequence is Sortilin-related receptor (2213 aa).

The first 28 residues, 1–28, serve as a signal peptide directing secretion; it reads MATRSSRRESRLPFLFTLVALLPPGALC. The propeptide at 29–81 is removed in mature form; that stretch reads EVWTRTLHGGRAPLPQERGFRVVQGDPRELRLWERGDARGASRADEKPLRRRR. The Cell attachment site motif lies at 63–65; that stretch reads RGD. Over 82–2136 the chain is Lumenal; the sequence is SAALQPEPIK…MQAARSTDVA (2055 aa). N-linked (GlcNAc...) asparagine glycosylation is present at Asn-99. Ser-114 carries the post-translational modification Phosphoserine. Residues 136–147 form a BNR 1 repeat; sequence YVSYDYGKSFNK. N-linked (GlcNAc...) asparagine glycosylation is present at Asn-158. Residues 232–243 form a BNR 2 repeat; it reads WKSDDFGQTWIM. N-linked (GlcNAc...) asparagine glycans are attached at residues Asn-368 and Asn-430. BNR repeat units follow at residues 441–452, 521–532, and 562–573; these read VITFDKGGTWEF, YISSSAGARWRE, and KYSTNEGETWKA. N-linked (GlcNAc...) asparagine glycosylation is found at Asn-616, Asn-674, Asn-817, and Asn-870. LDL-receptor class B repeat units follow at residues 799–842, 843–886, 887–929, 930–971, and 972–1012; these read NCLY…EPLS, QLLY…VPQE, GIMF…SVDD, QWIY…FKNE, and IYWD…FYKG. The 47-residue stretch at 1025-1071 folds into the EGF-like domain; it reads CSLLCLPRANNSKSCRCPDGVASSVLPSGDLMCDCPKGYELKNNTCV. Asn-1034 and Asn-1067 each carry an N-linked (GlcNAc...) asparagine glycan. LDL-receptor class A domains follow at residues 1075-1113, 1114-1154, 1155-1193, 1196-1235, 1237-1271, 1272-1316, 1322-1360, 1365-1404, and 1416-1454; these read DTCL…NCPT, TICD…HCEM, HQCR…NCTA, HTCE…ANCE, KCNG…QHCE, PLCT…GCSR, KVCD…NCEN, PNCS…DCGD, and STCL…ACPS. Intrachain disulfides connect Cys-1077-Cys-1089, Cys-1084-Cys-1102, Cys-1096-Cys-1111, Cys-1116-Cys-1130, Cys-1124-Cys-1143, Cys-1137-Cys-1152, Cys-1157-Cys-1169, Cys-1164-Cys-1182, Cys-1176-Cys-1191, Cys-1198-Cys-1210, Cys-1205-Cys-1223, Cys-1217-Cys-1234, Cys-1238-Cys-1248, Cys-1243-Cys-1261, Cys-1255-Cys-1270, Cys-1274-Cys-1288, Cys-1282-Cys-1301, Cys-1295-Cys-1314, Cys-1324-Cys-1336, Cys-1331-Cys-1349, and Cys-1343-Cys-1358. Residue Asn-1163 is glycosylated (N-linked (GlcNAc...) asparagine). Residue Asn-1190 is glycosylated (N-linked (GlcNAc...) asparagine). Asn-1245 is a glycosylation site (N-linked (GlcNAc...) asparagine). N-linked (GlcNAc...) asparagine glycosylation occurs at Asn-1366. Cystine bridges form between Cys-1367-Cys-1380, Cys-1375-Cys-1393, Cys-1387-Cys-1402, Cys-1418-Cys-1430, Cys-1425-Cys-1443, and Cys-1437-Cys-1452. Residue Asn-1457 is glycosylated (N-linked (GlcNAc...) asparagine). LDL-receptor class A domains follow at residues 1468–1507 and 1511–1550; these read GRCD…NCPT and LTCM…ACSD. 6 disulfides stabilise this stretch: Cys-1470–Cys-1483, Cys-1477–Cys-1496, Cys-1490–Cys-1505, Cys-1513–Cys-1526, Cys-1520–Cys-1539, and Cys-1533–Cys-1548. 6 consecutive Fibronectin type-III domains span residues 1556-1648, 1652-1744, 1748-1843, 1842-1926, 1933-2028, and 2029-2117; these read KVQN…TPEG, APQN…TVKG, PPPN…VRPP, PPAP…VVKM, PPRH…APDA, and LKII…LYDE. Residues Asn-1569, Asn-1607, Asn-1705, Asn-1732, Asn-1808, Asn-1853, Asn-1893, Asn-1985, Asn-2009, Asn-2053, Asn-2068, Asn-2075, and Asn-2091 are each glycosylated (N-linked (GlcNAc...) asparagine). A helical membrane pass occupies residues 2137-2157; that stretch reads AVVVPILFLILLSLGVGFAIL. The Cytoplasmic portion of the chain corresponds to 2158-2213; the sequence is YTKHRRLQSSFTAFANSHYSSRLGSAIFSSGDDLGEDDEDAPMITGFSDDVPMVIA. The Potential nuclear localization signal for the C-terminal fragment generated by PSEN1 signature appears at 2160–2163; sequence KHRR. The Endocytosis signal signature appears at 2171 to 2176; sequence FANSHY. A required for efficient Golgi apparatus - endosome sorting region spans residues 2189-2213; the sequence is DDLGEDDEDAPMITGFSDDVPMVIA. Residues 2200–2213 form a required for interaction with GGA1 and GGA2 region; sequence MITGFSDDVPMVIA. Ser-2205 bears the Phosphoserine; by ROCK2 mark. Positions 2207-2211 match the DXXLL motif involved in the interaction with GGA1 motif; the sequence is DVPMV.

Belongs to the VPS10-related sortilin family. SORL1 subfamily. After maturation cleavage, interacts (via N-terminus) with its own propeptide; this interaction prevents interaction with other ligands, including CRLF1, GDNF, GFRA1, IL6 and IL6R. Interacts (via N-terminal ectodomain) with APP, forming a 1:1 stoichiometric complex; this interaction retains APP in the trans-Golgi network and reduces processing into soluble APP-alpha and amyloid-beta peptides. Also interacts with APP C-terminal fragment C99 and with Abeta40. Interacts with beta-secretase BACE1/BACE; this interaction may affect BACE1-binding to APP and hence reduce BACE1-dependent APP cleavage. Interacts with LRPAP1/RAP. Interacts (via C-terminal cytosolic domain) with GGA1 and GGA2 (via N-terminal VHS domain). Interacts with PACS1. May interact (via the N-terminal ectodomain) with the morphogenetic neuropeptide, also called head activator or HA; this interaction is impaired in the presence of propeptide. Interacts with neurotensin/NTS. Interacts (via the N-terminal ectodomain) with PDGFB homodimer. Interacts (via N-terminal ectodomain) with the uPA receptor PLAUR. Interacts with uPA/PLAU and PAI1/SERPINE1, either individually or in complex with each other, leading to endocytosis. Also interacts with PAI1/SERPINE1 in complex with tPA/PLAT. Interacts (via C-terminus) with AP-1 and AP-2 complexes. Interacts with BMPR1A and BMPR1B. Interacts with lipoprotein lipase LPL; this interaction is optimal in slightly acidic conditions. Interacts (via N-terminal ectodomain) with GDNF (via propeptide) and GDNF receptor alpha-1/GFRA1, either individually or in complex with each other. The interaction with GDNF occurs mostly intracellularly. Also interacts with other GDNF receptor alpha family members, including GFRA2, GFRA3 and GFRA4. Interacts with the insulin receptor INSR; this interaction strongly increases the surface exposure of INSR. Interacts (via cytosolic C-terminus) with STK39/SPAK. Interacts (via N-terminal ectodomain) with the heterodimeric complex CRLF1-CLC; within this complex, the interaction is mediated predominantly by the CRLF1 moiety. Interacts with CNTFR, as well as with the tripartite signaling complex formed by CRLF1, CLC and CNTFR. Interacts (via N-terminal ectodomain) with IL6; this interaction leads to IL6 internalization and lysosomal degradation. Binding of SOLRL1 secreted N-terminal ectodomain to IL6 may increase IL6 trans signaling. Interacts with secreted IL6R; this interaction leads to IL6R internalization. Also interacts with transmembrane IL6R; this interaction does not affect subcellular location. Interacts with APOE. Interacts with apolipoprotein E-rich beta-VLDL. Interacts with APOA5; this interaction leads to APOA5 internalization and is abolished by heparin. Interaction with APOA5 results in enhanced binding to chylomicrons. Interacts with ROCK2. Interacts (via cytosolic C-terminus) with PPP3CB/calcineurin A beta. Interacts with NTRK2/TRKB; this interaction facilitates NTRK2 trafficking between synaptic plasma membranes, postsynaptic densities and cell soma, hence positively regulates BDNF signaling. Interacts (via cytosolic C-terminus) with HSPA12A in an ADP-dependent manner; this interaction affects SORL1 internalization and subcellular localization. Interacts (via N-terminal ectodomain) with ERBB2/HER2. In terms of processing, within the Golgi apparatus, the propeptide may be cleaved off by FURIN or a furin-like protease. After cleavage, the propeptide interacts with the mature protein N-terminus, preventing the association with other ligands. At the cell surface, partially subjected to proteolytic shedding that releases the ectodomain in the extracellular milieu. The shedding may be catalyzed by ADAM17/TACE. Following shedding, PSEN1/presenilin-1 cleaves the remaining transmembrane fragment and catalyzes the release of a C-terminal fragment in the cytosol and of a soluble N-terminal beta fragment in the extracellular milieu. The C-terminal cytosolic fragment localizes to the nucleus. Phosphorylation at Ser-2205 facilitates the interaction with GGA1. Expressed in brain, in particular the hippocampus, dentate gyrus, and cerebral cortex (at protein level). Also detected in liver, adrenal glands, pancreas and testis. Expressed in smooth muscle cells, predominantly during proliferation.

It localises to the golgi apparatus membrane. The protein localises to the golgi apparatus. The protein resides in the trans-Golgi network membrane. It is found in the endosome membrane. Its subcellular location is the early endosome membrane. It localises to the recycling endosome membrane. The protein localises to the endoplasmic reticulum membrane. The protein resides in the endosome. It is found in the multivesicular body membrane. Its subcellular location is the cell membrane. It localises to the cytoplasmic vesicle. The protein localises to the secretory vesicle membrane. The protein resides in the secreted. Sorting receptor that directs several proteins to their correct location within the cell. Along with AP-1 complex, involved Golgi apparatus - endosome sorting. Sorting receptor for APP, regulating its intracellular trafficking and processing into amyloidogenic-beta peptides. Retains APP in the trans-Golgi network, hence preventing its transit through late endosomes where amyloid beta peptides Abeta40 and Abeta42 are generated. May also sort newly produced amyloid-beta peptides to lysosomes for catabolism. Does not affect APP trafficking from the endoplasmic reticulum to Golgi compartments. Sorting receptor for the BDNF receptor NTRK2/TRKB that facilitates NTRK2 trafficking between synaptic plasma membranes, postsynaptic densities and cell soma, hence positively regulates BDNF signaling by controlling the intracellular location of its receptor. Sorting receptor for GDNF that promotes GDNF regulated, but not constitutive secretion. Sorting receptor for the GDNF-GFRA1 complex, directing it from the cell surface to endosomes. GDNF is then targeted to lysosomes and degraded, while its receptor GFRA1 recycles back to the cell membrane, resulting in a GDNF clearance pathway. The SORL1-GFRA1 complex further targets RET for endocytosis, but not for degradation, affecting GDNF-induced neurotrophic activities. Sorting receptor for ERBB2/HER2. Regulates ERBB2 subcellular distribution by promoting its recycling after internalization from endosomes back to the plasma membrane, hence stimulating phosphoinositide 3-kinase (PI3K)-dependent ERBB2 signaling. Sorting receptor for lipoprotein lipase LPL. Promotes LPL localization to endosomes and later to the lysosomes, leading to degradation of newly synthesized LPL. Potential sorting receptor for APOA5, inducing APOA5 internalization to early endosomes, then to late endosomes, wherefrom a portion is sent to lysosomes and degradation, another portion is sorted to the trans-Golgi network. Sorting receptor for the insulin receptor INSR. Promotes recycling of internalized INSR via the Golgi apparatus back to the cell surface, thereby preventing lysosomal INSR catabolism, increasing INSR cell surface expression and strengthening insulin signal reception in adipose tissue. Does not affect INSR internalization. Plays a role in renal ion homeostasis, controlling the phospho-regulation of SLC12A1/NKCC2 by STK39/SPAK kinase and PPP3CB/calcineurin A beta phosphatase, possibly through intracellular sorting of STK39 and PPP3CB. Stimulates, via the N-terminal ectodomain, the proliferation and migration of smooth muscle cells, possibly by increasing cell surface expression of the urokinase receptor uPAR/PLAUR. This may promote extracellular matrix proteolysis and hence facilitate cell migration. By acting on the migration of intimal smooth muscle cells, may accelerate intimal thickening following vascular injury. Promotes adhesion of monocytes. Stimulates proliferation and migration of monocytes/macrophages. Through its action on intimal smooth muscle cells and macrophages, may accelerate intimal thickening and macrophage foam cell formation in the process of atherosclerosis. Regulates hypoxia-enhanced adhesion of hematopoietic stem and progenitor cells to the bone marrow stromal cells via a PLAUR-mediated pathway. This function is mediated by the N-terminal ectodomain. Metabolic regulator, which functions to maintain the adequate balance between lipid storage and oxidation in response to changing environmental conditions, such as temperature and diet. The N-terminal ectodomain negatively regulates adipose tissue energy expenditure, acting through the inhibition the BMP/Smad pathway. May regulate signaling by the heterodimeric neurotrophic cytokine CLCF1-CRLF1 bound to the CNTFR receptor by promoting the endocytosis of the tripartite complex CLCF1-CRLF1-CNTFR and lysosomal degradation. May regulate IL6 signaling, decreasing cis signaling, possibly by interfering with IL6-binding to membrane-bound IL6R, while up-regulating trans signaling via soluble IL6R. In Oryctolagus cuniculus (Rabbit), this protein is Sortilin-related receptor (SORL1).